The following is a 478-amino-acid chain: Glycogen synthase (478 aa).

Residue Lys-15 participates in ADP-alpha-D-glucose binding.

The protein belongs to the glycosyltransferase 1 family. Bacterial/plant glycogen synthase subfamily.

The enzyme catalyses [(1-&gt;4)-alpha-D-glucosyl](n) + ADP-alpha-D-glucose = [(1-&gt;4)-alpha-D-glucosyl](n+1) + ADP + H(+). Its pathway is glycan biosynthesis; glycogen biosynthesis. In terms of biological role, synthesizes alpha-1,4-glucan chains using ADP-glucose. This chain is Glycogen synthase, found in Acholeplasma laidlawii (strain PG-8A).